Here is a 127-residue protein sequence, read N- to C-terminus: Small ribosomal subunit protein uS11 (127 aa).

The protein belongs to the universal ribosomal protein uS11 family. In terms of assembly, part of the 30S ribosomal subunit. Interacts with proteins S7 and S18. Binds to IF-3.

In terms of biological role, located on the platform of the 30S subunit, it bridges several disparate RNA helices of the 16S rRNA. Forms part of the Shine-Dalgarno cleft in the 70S ribosome. This Rickettsia africae (strain ESF-5) protein is Small ribosomal subunit protein uS11.